Here is a 140-residue protein sequence, read N- to C-terminus: MPLESSSSMPLSFPSLLPSVPHNTNPSPPLMSYITSQEMKCILHWFANWSGPQRERFLEDLVAKAVPEKLQPLLDSLEQLSVSGADRPPSIFECQLHLWDQWFRGWAEQERNEFVRQLEFSEPDFVAKFYQAVAATAGKD.

Its subcellular location is the mitochondrion. This is an uncharacterized protein from Homo sapiens (Human).